A 376-amino-acid polypeptide reads, in one-letter code: uncharacterized protein (376 aa).

The protein belongs to the glycosyltransferase 28 family.

This is an uncharacterized protein from Methanosarcina mazei (strain ATCC BAA-159 / DSM 3647 / Goe1 / Go1 / JCM 11833 / OCM 88) (Methanosarcina frisia).